We begin with the raw amino-acid sequence, 332 residues long: 4-hydroxy-3-methylbut-2-enyl diphosphate reductase (332 aa).

Cys-13 is a [4Fe-4S] cluster binding site. His-41 and His-75 together coordinate (2E)-4-hydroxy-3-methylbut-2-enyl diphosphate. His-41 and His-75 together coordinate dimethylallyl diphosphate. Isopentenyl diphosphate-binding residues include His-41 and His-75. Residue Cys-97 coordinates [4Fe-4S] cluster. Position 125 (His-125) interacts with (2E)-4-hydroxy-3-methylbut-2-enyl diphosphate. His-125 is a binding site for dimethylallyl diphosphate. Position 125 (His-125) interacts with isopentenyl diphosphate. Catalysis depends on Glu-127, which acts as the Proton donor. (2E)-4-hydroxy-3-methylbut-2-enyl diphosphate is bound at residue Thr-168. Cys-229 serves as a coordination point for [4Fe-4S] cluster. 4 residues coordinate (2E)-4-hydroxy-3-methylbut-2-enyl diphosphate: Ser-257, Ser-258, Asn-259, and Ser-306. Residues Ser-257, Ser-258, Asn-259, and Ser-306 each coordinate dimethylallyl diphosphate. 4 residues coordinate isopentenyl diphosphate: Ser-257, Ser-258, Asn-259, and Ser-306.

Belongs to the IspH family. It depends on [4Fe-4S] cluster as a cofactor.

The catalysed reaction is isopentenyl diphosphate + 2 oxidized [2Fe-2S]-[ferredoxin] + H2O = (2E)-4-hydroxy-3-methylbut-2-enyl diphosphate + 2 reduced [2Fe-2S]-[ferredoxin] + 2 H(+). It carries out the reaction dimethylallyl diphosphate + 2 oxidized [2Fe-2S]-[ferredoxin] + H2O = (2E)-4-hydroxy-3-methylbut-2-enyl diphosphate + 2 reduced [2Fe-2S]-[ferredoxin] + 2 H(+). It participates in isoprenoid biosynthesis; dimethylallyl diphosphate biosynthesis; dimethylallyl diphosphate from (2E)-4-hydroxy-3-methylbutenyl diphosphate: step 1/1. The protein operates within isoprenoid biosynthesis; isopentenyl diphosphate biosynthesis via DXP pathway; isopentenyl diphosphate from 1-deoxy-D-xylulose 5-phosphate: step 6/6. In terms of biological role, catalyzes the conversion of 1-hydroxy-2-methyl-2-(E)-butenyl 4-diphosphate (HMBPP) into a mixture of isopentenyl diphosphate (IPP) and dimethylallyl diphosphate (DMAPP). Acts in the terminal step of the DOXP/MEP pathway for isoprenoid precursor biosynthesis. This Chlorobaculum parvum (strain DSM 263 / NCIMB 8327) (Chlorobium vibrioforme subsp. thiosulfatophilum) protein is 4-hydroxy-3-methylbut-2-enyl diphosphate reductase.